A 561-amino-acid polypeptide reads, in one-letter code: Zinc finger protein with KRAB and SCAN domains 1 (561 aa).

The segment at 1–51 (MMTAESRETTGLSPQAAQEKDGIVIVKVEEEDEEDHMWGQDSSLQETPPPD) is disordered. Position 13 is a phosphoserine (Ser13). Lys27 participates in a covalent cross-link: Glycyl lysine isopeptide (Lys-Gly) (interchain with G-Cter in SUMO2). The SCAN box domain occupies 56–138 (RQRFRRFCYQ…TLLEDLELDL (83 aa)). Residues 163-187 (VQESSSFDHHETAQSHFKHSSRKPR) form a disordered region. Residues 178–187 (HFKHSSRKPR) are compositionally biased toward basic residues. Glycyl lysine isopeptide (Lys-Gly) (interchain with G-Cter in SUMO2) cross-links involve residues Lys180 and Lys226. In terms of domain architecture, KRAB spans 225-304 (VKIEDMAVSL…QKEFGEKREQ (80 aa)). Positions 260-275 (NVFSQGSENRNGNEST) are enriched in polar residues. Residues 260 to 372 (NVFSQGSENR…NTPEEAPSGA (113 aa)) form a disordered region. 2 stretches are compositionally biased toward basic and acidic residues: residues 276 to 286 (SKAEVKEDSTS) and 294 to 349 (FQKE…EKGK). Residues Lys277, Lys296, Lys301, and Lys336 each participate in a glycyl lysine isopeptide (Lys-Gly) (interchain with G-Cter in SUMO2) cross-link. Over residues 355–365 (FSLSANFNNTP) the composition is skewed to polar residues. Lys373 participates in a covalent cross-link: Glycyl lysine isopeptide (Lys-Gly) (interchain with G-Cter in SUMO2). C2H2-type zinc fingers lie at residues 375-397 (HRCDECGKCFTRSSSLIRHKIIH), 403-425 (YECNECGKAFSLNSNLVLHQRIH), 431-453 (HECNECGKAFSHSSNLILHQRIH), 459-481 (YECNECGKAFSQSSDLTKHQRIH), 487-509 (YECSECGKAFNRNSYLILHRRIH), and 515-537 (YKCTKCGKAFTRSSTLTLHHRIH). Residues Lys410, Lys438, and Lys476 each participate in a glycyl lysine isopeptide (Lys-Gly) (interchain with G-Cter in SUMO2) cross-link. Lys558 is covalently cross-linked (Glycyl lysine isopeptide (Lys-Gly) (interchain with G-Cter in SUMO2)).

It belongs to the krueppel C2H2-type zinc-finger protein family.

Its subcellular location is the nucleus. Its function is as follows. May be involved in transcriptional regulation. This is Zinc finger protein with KRAB and SCAN domains 1 (Zkscan1) from Mus musculus (Mouse).